A 519-amino-acid polypeptide reads, in one-letter code: MAMCARLCGVGQSGGCRRRQQRKGAGNDPELEDEEEEDEVRIEAGEAAVTPRRPHSLLLLPPEILVEIFSLLPGTELGGLAQVCSKFRQILTTDTIWKRRCRQEYGVCENLRKLEVTGVSCHDVYVKLLHQYRHILGLWQPDIGPYGGLLNVVVDGLFIIGWMYLPPHDPHVDEAMRMKPVFRIHLMERKDATVECMYGHKGPHNSQIQIVKKDEFSTKCLQTDYHRMSGGRQEEFRTWLREDLGRTLEDIFHEHMQELILMKFIYICQYDNCLTYRRIYHPPSHPEDLLNPGFFKGTYGSHGLEIVMLSFHGTIAKVTKITGDPNVPAGQQTVEVDLTRPVQLPDVEHLRNFDEMSRLILDVQAQIHREQRQTDNEEDDGRGAGPDKAEPAQQPAPLLRPPNEDANGADDDGDGGEQKPPNVQSFVLPAGVMARNEEYPRSCKMCFYGTGLIAGHGFSSPERTPGLFILFDEDRFGFIWLELKSFSLYSRMRDRFQQSEAPSLEAFEEMLQNMQSWTT.

The disordered stretch occupies residues 11–37 (GQSGGCRRRQQRKGAGNDPELEDEEEE). One can recognise an F-box domain in the interval 54-100 (PHSLLLLPPEILVEIFSLLPGTELGGLAQVCSKFRQILTTDTIWKRR). Zn(2+) is bound by residues cysteine 196, histidine 204, cysteine 220, and histidine 226. The segment covering 369-390 (REQRQTDNEEDDGRGAGPDKAE) has biased composition (basic and acidic residues). The disordered stretch occupies residues 369 to 424 (REQRQTDNEEDDGRGAGPDKAEPAQQPAPLLRPPNEDANGADDDGDGGEQKPPNVQ).

It belongs to the FBXO31 family. Part of a SCF (SKP1-cullin-F-box) protein ligase complex SCF(FBXO31).

It is found in the cytoplasm. Its pathway is protein modification; protein ubiquitination. Its function is as follows. Substrate-recognition component of the SCF(FBXO31) protein ligase complex, which specifically mediates the ubiquitination of proteins amidated at their C-terminus in response to oxidative stress, leading to their degradation by the proteasome. Fbxo31 specifically recognizes and binds C-terminal peptides bearing an amide: C-terminal amidation in response to oxidative stress takes place following protein fragmentation. The SCF(FBXO31) also plays a role in G1 arrest following DNA damage by mediating ubiquitination of phosphorylated cyclin-D1 (ccnd1), promoting its degradation by the proteasome, resulting in G1 arrest. The SCF(FBXO31) complex is however not a major regulator of ccnd1 stability during the G1/S transition. This is F-box only protein 31-A (fbxo31-a) from Xenopus laevis (African clawed frog).